A 227-amino-acid chain; its full sequence is Cytochrome c oxidase subunit 2 (227 aa).

Residues 1–14 lie on the Mitochondrial intermembrane side of the membrane; that stretch reads MANHSQLGFQDASS. A helical transmembrane segment spans residues 15-45; the sequence is PIMEELVEFHDHALMVALAICSLVLYLLTLM. Topologically, residues 46 to 58 are mitochondrial matrix; that stretch reads LTQKLSSNTVDAQ. Residues 59–86 traverse the membrane as a helical segment; it reads EVELIWTILPAIVLVLLALPSLQILYMM. Residues 87-227 are Mitochondrial intermembrane-facing; that stretch reads DEIEEPDLTL…FETWSSLLSS (141 aa). His160, Cys195, Glu197, Cys199, His203, and Met206 together coordinate Cu cation. Position 197 (Glu197) interacts with Mg(2+).

The protein belongs to the cytochrome c oxidase subunit 2 family. In terms of assembly, component of the cytochrome c oxidase (complex IV, CIV), a multisubunit enzyme composed of 14 subunits. The complex is composed of a catalytic core of 3 subunits MT-CO1, MT-CO2 and MT-CO3, encoded in the mitochondrial DNA, and 11 supernumerary subunits COX4I, COX5A, COX5B, COX6A, COX6B, COX6C, COX7A, COX7B, COX7C, COX8 and NDUFA4, which are encoded in the nuclear genome. The complex exists as a monomer or a dimer and forms supercomplexes (SCs) in the inner mitochondrial membrane with NADH-ubiquinone oxidoreductase (complex I, CI) and ubiquinol-cytochrome c oxidoreductase (cytochrome b-c1 complex, complex III, CIII), resulting in different assemblies (supercomplex SCI(1)III(2)IV(1) and megacomplex MCI(2)III(2)IV(2)). Found in a complex with TMEM177, COA6, COX18, COX20, SCO1 and SCO2. Interacts with TMEM177 in a COX20-dependent manner. Interacts with COX20. Interacts with COX16. It depends on Cu cation as a cofactor.

It is found in the mitochondrion inner membrane. It catalyses the reaction 4 Fe(II)-[cytochrome c] + O2 + 8 H(+)(in) = 4 Fe(III)-[cytochrome c] + 2 H2O + 4 H(+)(out). Its function is as follows. Component of the cytochrome c oxidase, the last enzyme in the mitochondrial electron transport chain which drives oxidative phosphorylation. The respiratory chain contains 3 multisubunit complexes succinate dehydrogenase (complex II, CII), ubiquinol-cytochrome c oxidoreductase (cytochrome b-c1 complex, complex III, CIII) and cytochrome c oxidase (complex IV, CIV), that cooperate to transfer electrons derived from NADH and succinate to molecular oxygen, creating an electrochemical gradient over the inner membrane that drives transmembrane transport and the ATP synthase. Cytochrome c oxidase is the component of the respiratory chain that catalyzes the reduction of oxygen to water. Electrons originating from reduced cytochrome c in the intermembrane space (IMS) are transferred via the dinuclear copper A center (CU(A)) of subunit 2 and heme A of subunit 1 to the active site in subunit 1, a binuclear center (BNC) formed by heme A3 and copper B (CU(B)). The BNC reduces molecular oxygen to 2 water molecules using 4 electrons from cytochrome c in the IMS and 4 protons from the mitochondrial matrix. This Coturnix japonica (Japanese quail) protein is Cytochrome c oxidase subunit 2 (MT-CO2).